Reading from the N-terminus, the 239-residue chain is tRNA (guanine-N(7)-)-methyltransferase (239 aa).

S-adenosyl-L-methionine is bound by residues E69, E94, D121, and D144. The active site involves D144. K148 contacts substrate. An interaction with RNA region spans residues 150 to 155; it reads RHNKRR. Residues D180 and 217-220 each bind substrate; that span reads TKFE.

This sequence belongs to the class I-like SAM-binding methyltransferase superfamily. TrmB family. Monomer.

The catalysed reaction is guanosine(46) in tRNA + S-adenosyl-L-methionine = N(7)-methylguanosine(46) in tRNA + S-adenosyl-L-homocysteine. The protein operates within tRNA modification; N(7)-methylguanine-tRNA biosynthesis. In terms of biological role, catalyzes the formation of N(7)-methylguanine at position 46 (m7G46) in tRNA. This chain is tRNA (guanine-N(7)-)-methyltransferase, found in Shigella flexneri serotype 5b (strain 8401).